Reading from the N-terminus, the 487-residue chain is Probable glutamate receptor (487 aa).

The first 23 residues, 1–23 (MDKGLHFIFCVVTAVLLLRESSQ), serve as a signal peptide directing secretion. At 24 to 169 (TGAMRNDDAM…FFHFLAPFSK (146 aa)) the chain is on the extracellular side. Asparagine 104 is a glycosylation site (N-linked (GlcNAc...) asparagine). Residues 170 to 190 (ETWTGLLFAYVLTCVCLFLVA) traverse the membrane as a helical segment. Topologically, residues 191 to 235 (RLSPCEWNEPKNEENHFTFLNSLWFGAGALTLQGVTPRPKAFSVR) are cytoplasmic. The chain crosses the membrane as a helical span at residues 236-256 (VIAAIWWLFTIALLAAYIANF). At 257–419 (TALLSSGSEQ…EGWSPLQPQA (163 aa)) the chain is on the extracellular side. Residues 420–440 (LGGLFLTLAIGLALGVIAAMV) form a helical membrane-spanning segment. Over 441–487 (ELSNKSRHAAGHIKKSCCSIFTEEMCTRLRIKENTRQTQETSGRANA) the chain is Cytoplasmic.

It belongs to the glutamate-gated ion channel (TC 1.A.10.1) family.

The protein localises to the cell membrane. Its subcellular location is the postsynaptic cell membrane. Its function is as follows. Receptor for glutamate. L-glutamate acts as an excitatory neurotransmitter at many synapses in the central nervous system. The postsynaptic actions of Glu are mediated by a variety of receptors that are named according to their selective agonists. In Gallus gallus (Chicken), this protein is Probable glutamate receptor (KBP).